Here is a 321-residue protein sequence, read N- to C-terminus: Probable UDP-sugar transporter protein SLC35A4 (321 aa).

The Cytoplasmic segment spans residues 1–22; sequence MYSVNIEPDGSNHSPSRKRLKQ. Residues 23-43 form a helical membrane-spanning segment; sequence ILWGLMLVLSVTIYGSHAPLI. The Lumenal segment spans residues 44 to 56; sequence YLCKVNGEIPFSS. A helical membrane pass occupies residues 57–77; that stretch reads SAVVLLIELSKFVISLVFFLI. Topologically, residues 78-91 are cytoplasmic; it reads QDWKSLKASVSWHL. A helical membrane pass occupies residues 92-112; sequence AAPYAVPAVLYGANNNLVVYI. Residues 113-119 are Lumenal-facing; the sequence is QHFMDPS. Residues 120-140 traverse the membrane as a helical segment; sequence SFQVLSNLKIVSTAVLYSLFL. Topologically, residues 141-149 are cytoplasmic; that stretch reads RQRLSVRRW. Residues 150–170 form a helical membrane-spanning segment; sequence LSVFLLLAAGVFYSYGGIQDL. The Lumenal segment spans residues 171–180; it reads EKVSSDTNLY. The chain crosses the membrane as a helical span at residues 181 to 201; that stretch reads VTLPGLLLMLAYCLISGLSAV. Residues 202–211 are Cytoplasmic-facing; it reads YTEMTLKTQK. The helical transmembrane segment at 212–232 threads the bilayer; that stretch reads IPLNMQNLYLYSFGIIINLTA. At 233–247 the chain is on the lumenal side; that stretch reads HLTSSKNSDFFDGFS. The chain crosses the membrane as a helical span at residues 248–268; the sequence is VWVWVIILSQALNGLIMSLVM. The Cytoplasmic portion of the chain corresponds to 269 to 321; it reads KLSNNITRLFIISFSMLANGFLSFILFQLQLTALFFLAVVLIGLAVYMYYGMK.

It belongs to the nucleotide-sugar transporter family. SLC35A subfamily.

It is found in the golgi apparatus membrane. It carries out the reaction CDP-L-ribitol(in) + CDP(out) = CDP-L-ribitol(out) + CDP(in). Functionally, mediates the transport of CDP-ribitol. Does not exhibit CMP-sialic acid, UDP-galactose and UDP-N-acetylglucosamine transport activity. In Xenopus tropicalis (Western clawed frog), this protein is Probable UDP-sugar transporter protein SLC35A4.